The primary structure comprises 558 residues: NAD-dependent malic enzyme 2 (558 aa).

Y101 acts as the Proton donor in catalysis. R154 provides a ligand contact to NAD(+). Catalysis depends on K172, which acts as the Proton acceptor. A divalent metal cation-binding residues include E243, D244, and D267. Residues D267 and N411 each coordinate NAD(+).

It belongs to the malic enzymes family. In terms of assembly, homotetramer. It depends on Mg(2+) as a cofactor. The cofactor is Mn(2+).

It catalyses the reaction (S)-malate + NAD(+) = pyruvate + CO2 + NADH. The enzyme catalyses oxaloacetate + H(+) = pyruvate + CO2. The sequence is that of NAD-dependent malic enzyme 2 from Photobacterium profundum (strain SS9).